Consider the following 629-residue polypeptide: tRNA uridine 5-carboxymethylaminomethyl modification enzyme MnmG (629 aa).

An FAD-binding site is contributed by G4–G9. NAD(+) is bound at residue G268–F282.

Belongs to the MnmG family. In terms of assembly, homodimer. Heterotetramer of two MnmE and two MnmG subunits. FAD serves as cofactor.

The protein localises to the cytoplasm. NAD-binding protein involved in the addition of a carboxymethylaminomethyl (cmnm) group at the wobble position (U34) of certain tRNAs, forming tRNA-cmnm(5)s(2)U34. This chain is tRNA uridine 5-carboxymethylaminomethyl modification enzyme MnmG, found in Helicobacter hepaticus (strain ATCC 51449 / 3B1).